A 465-amino-acid polypeptide reads, in one-letter code: Cytochrome c peroxidase Ccp (465 aa).

At 1–6 (MKMVSR) the chain is on the cytoplasmic side. Residues 7–27 (ITAIGLAGVAICYLGLSGYVW) form a helical membrane-spanning segment. Residues 28 to 465 (YHDNKRSKQA…VYTPYMQDKQ (438 aa)) lie on the Periplasmic side of the membrane. Cytochrome c domains are found at residues 42–155 (SAVS…AKQR), 185–287 (QKVA…EKDP), and 337–454 (AQQK…HSLN). Positions 59, 62, 63, 125, 207, 210, 211, 351, 354, 355, and 429 each coordinate heme c.

The recombinant enzyme lacking its transmembrane domain is a monomer in solution. Heme c is required as a cofactor.

Its subcellular location is the cell inner membrane. Does not require reductive activation for maximum activity, as peroxidatic heme is high-spin His/OH(-) 6-coordinated. Calcium ions are needed to attain maximum peroxidase activity. Its function is as follows. Cytochrome peroxidase that enables anaerobic respiration with H(2)O(2) as a terminal electron acceptor. It receives electrons from the quinol pool. Menaquinol is probably the electron donor in vivo. It can use menadiol (a menaquinol analog), hydroquinone, duroquinol and the artificial electron donor ABTS(2-) in vitro, but only menadiol and hydroquinone can efficiently transfer electrons to Ccp, maintaining the catalytic activity of the enzyme. It enables E.coli to grow on a nonfermentable carbon source when H(2)O(2) is supplied. Plays a role in the peroxide stress response under anaerobic conditions. However, it does not degrade H(2)O(2) quickly enough to lower the periplasmic H(2)O(2) level below that of the surrounding medium and protect the cell from its toxic effects. This chain is Cytochrome c peroxidase Ccp, found in Escherichia coli (strain K12).